We begin with the raw amino-acid sequence, 292 residues long: Ribosomal protein L11 methyltransferase (292 aa).

Residues Thr144, Gly165, Asp187, and Asn229 each contribute to the S-adenosyl-L-methionine site.

The protein belongs to the methyltransferase superfamily. PrmA family.

It is found in the cytoplasm. The enzyme catalyses L-lysyl-[protein] + 3 S-adenosyl-L-methionine = N(6),N(6),N(6)-trimethyl-L-lysyl-[protein] + 3 S-adenosyl-L-homocysteine + 3 H(+). In terms of biological role, methylates ribosomal protein L11. The sequence is that of Ribosomal protein L11 methyltransferase from Pseudomonas syringae pv. tomato (strain ATCC BAA-871 / DC3000).